Here is a 195-residue protein sequence, read N- to C-terminus: Der GTPase-activating protein YihI (195 aa).

The disordered stretch occupies residues 1 to 81 (MSRTKKTRRI…KAVVKEVKDP (81 aa)). 3 stretches are compositionally biased toward basic and acidic residues: residues 9–23 (RITDIMPARKTDKPK), 38–49 (TRYELDAQAREE), and 66–81 (DPAEQKKAVVKEVKDP).

The protein belongs to the YihI family. In terms of assembly, interacts with Der.

Its function is as follows. A GTPase-activating protein (GAP) that modifies Der/EngA GTPase function. May play a role in ribosome biogenesis. The chain is Der GTPase-activating protein YihI from Mannheimia haemolytica (Pasteurella haemolytica).